The following is a 485-amino-acid chain: Serine hydroxymethyltransferase, mitochondrial (485 aa).

The residue at position 259 (Lys-259) is an N6-(pyridoxal phosphate)lysine.

Belongs to the SHMT family. In terms of assembly, homotetramer. Pyridoxal 5'-phosphate serves as cofactor.

Its subcellular location is the mitochondrion. It carries out the reaction (6R)-5,10-methylene-5,6,7,8-tetrahydrofolate + glycine + H2O = (6S)-5,6,7,8-tetrahydrofolate + L-serine. The protein operates within one-carbon metabolism; tetrahydrofolate interconversion. Functionally, interconversion of serine and glycine. The sequence is that of Serine hydroxymethyltransferase, mitochondrial (SHM1) from Candida glabrata (strain ATCC 2001 / BCRC 20586 / JCM 3761 / NBRC 0622 / NRRL Y-65 / CBS 138) (Yeast).